Here is a 1486-residue protein sequence, read N- to C-terminus: Chromosome partition protein MukB (1486 aa).

34–41 contributes to the ATP binding site; that stretch reads GGNGAGKS. 3 coiled-coil regions span residues 326 to 418, 444 to 480, and 509 to 603; these read LEAD…QYNQ, LETFQAKELEATEKMLSLEQKMSMAQTAHSQFEQAYQ, and RHLA…RAPV. The flexible hinge stretch occupies residues 666–783; the sequence is PGGSEDQRLN…EVPLFGRAAR (118 aa). Coiled-coil stretches lie at residues 835 to 923, 977 to 1115, and 1209 to 1266; these read EAEI…AKLE, EMLS…TAKA, and VEAI…QNVS.

This sequence belongs to the SMC family. MukB subfamily. As to quaternary structure, homodimerization via its hinge domain. Binds to DNA via its C-terminal region. Interacts, and probably forms a ternary complex, with MukE and MukF via its C-terminal region. The complex formation is stimulated by calcium or magnesium. Interacts with tubulin-related protein FtsZ.

The protein localises to the cytoplasm. Its subcellular location is the nucleoid. Its function is as follows. Plays a central role in chromosome condensation, segregation and cell cycle progression. Functions as a homodimer, which is essential for chromosome partition. Involved in negative DNA supercoiling in vivo, and by this means organize and compact chromosomes. May achieve or facilitate chromosome segregation by condensation DNA from both sides of a centrally located replisome during cell division. This is Chromosome partition protein MukB from Escherichia coli (strain 55989 / EAEC).